Consider the following 191-residue polypeptide: LOB domain-containing protein 19 (191 aa).

Positions 15–117 constitute an LOB domain; it reads GPCGACKFLR…AELAHVQARL (103 aa).

It belongs to the LOB domain-containing protein family. Expressed in shoots, roots and floral tissues, but not in stems or leaves.

The sequence is that of LOB domain-containing protein 19 (LBD19) from Arabidopsis thaliana (Mouse-ear cress).